We begin with the raw amino-acid sequence, 122 residues long: Large ribosomal subunit protein bL12 (122 aa).

It belongs to the bacterial ribosomal protein bL12 family. Homodimer. Part of the ribosomal stalk of the 50S ribosomal subunit. Forms a multimeric L10(L12)X complex, where L10 forms an elongated spine to which 2 to 4 L12 dimers bind in a sequential fashion. Binds GTP-bound translation factors.

Its function is as follows. Forms part of the ribosomal stalk which helps the ribosome interact with GTP-bound translation factors. Is thus essential for accurate translation. This Buchnera aphidicola subsp. Schizaphis graminum (strain Sg) protein is Large ribosomal subunit protein bL12.